Here is a 103-residue protein sequence, read N- to C-terminus: MYAVIKTGGKQYRVAAGEKIKVEQIPADVGSEITIDQVLMVGEGESVKIGTPVVSGAAVKATVVSHGRHDKVKIFKMRRRKHYQKHQGHRQNYTELRIEAISA.

Belongs to the bacterial ribosomal protein bL21 family. In terms of assembly, part of the 50S ribosomal subunit. Contacts protein L20.

In terms of biological role, this protein binds to 23S rRNA in the presence of protein L20. The sequence is that of Large ribosomal subunit protein bL21 from Azoarcus sp. (strain BH72).